The primary structure comprises 237 residues: MARSMTSLVAVVPAAGVGSRMKADRPKQYLQIHGKTILEHTIERLLSHPAITQVVVAVSEDDPYYSELAIAQHPDIVRVAGGKERADSVLSALRFLSLQQQKADWVLVHDAARPCVAHQDIDALIERCSSHETGGILATPVRDTMKRANAQQMIDHTVDRNALWHALTPQMFKAEVLTDALSDALAQGVAITDEASALEWRGELPALVQGCSSNIKVTQPEDLALAEFYLSREKDRK.

Belongs to the IspD/TarI cytidylyltransferase family. IspD subfamily.

The enzyme catalyses 2-C-methyl-D-erythritol 4-phosphate + CTP + H(+) = 4-CDP-2-C-methyl-D-erythritol + diphosphate. The protein operates within isoprenoid biosynthesis; isopentenyl diphosphate biosynthesis via DXP pathway; isopentenyl diphosphate from 1-deoxy-D-xylulose 5-phosphate: step 2/6. Its function is as follows. Catalyzes the formation of 4-diphosphocytidyl-2-C-methyl-D-erythritol from CTP and 2-C-methyl-D-erythritol 4-phosphate (MEP). The sequence is that of 2-C-methyl-D-erythritol 4-phosphate cytidylyltransferase from Vibrio vulnificus (strain CMCP6).